The primary structure comprises 430 residues: Long-chain specific acyl-CoA dehydrogenase, mitochondrial (430 aa).

The transit peptide at 1 to 30 directs the protein to the mitochondrion; sequence MATRLLRGSLRLWGGLCAPRLPTASRCSHS. Lys42 is subject to N6-acetyllysine. Phosphoserine is present on residues Ser54 and Ser55. N6-acetyllysine; alternate is present on residues Lys66 and Lys81. Residues Lys66 and Lys81 each carry the N6-succinyllysine; alternate modification. N6-acetyllysine is present on residues Lys92 and Lys95. N6-succinyllysine is present on Lys165. FAD contacts are provided by residues 170–179 and 203–205; these read IAMTEPGAGS and FIT. Ser179 provides a ligand contact to substrate. A substrate-binding site is contributed by 227 to 228; sequence AH. N6-succinyllysine is present on Lys240. N6-acetyllysine; alternate is present on residues Lys254 and Lys279. Lys254 and Lys279 each carry N6-succinyllysine; alternate. Residues Tyr282 and 289 to 292 contribute to the substrate site; that span reads PQER. Glu291 acts as the Proton acceptor in catalysis. Arg317 provides a ligand contact to FAD. An N6-acetyllysine modification is found at Lys318. Lys322 is modified (N6-acetyllysine; alternate). Lys322 is modified (N6-succinyllysine; alternate). Gln328 serves as a coordination point for FAD. At Lys358 the chain carries N6-acetyllysine. At Ser362 the chain carries Phosphoserine. An FAD-binding site is contributed by 385-389; it reads QLHGG. 412–413 is a binding site for substrate; that stretch reads GG. 414 to 416 is an FAD binding site; sequence TNE.

This sequence belongs to the acyl-CoA dehydrogenase family. Homotetramer. Requires FAD as cofactor. Acetylation at Lys-318 and Lys-322 in proximity of the cofactor-binding sites strongly reduces catalytic activity. These sites are deacetylated by SIRT3.

It localises to the mitochondrion matrix. It catalyses the reaction a long-chain 2,3-saturated fatty acyl-CoA + oxidized [electron-transfer flavoprotein] + H(+) = a long-chain (2E)-enoyl-CoA + reduced [electron-transfer flavoprotein]. The catalysed reaction is hexanoyl-CoA + oxidized [electron-transfer flavoprotein] + H(+) = (2E)-hexenoyl-CoA + reduced [electron-transfer flavoprotein]. It carries out the reaction octanoyl-CoA + oxidized [electron-transfer flavoprotein] + H(+) = (2E)-octenoyl-CoA + reduced [electron-transfer flavoprotein]. The enzyme catalyses decanoyl-CoA + oxidized [electron-transfer flavoprotein] + H(+) = (2E)-decenoyl-CoA + reduced [electron-transfer flavoprotein]. It catalyses the reaction dodecanoyl-CoA + oxidized [electron-transfer flavoprotein] + H(+) = (2E)-dodecenoyl-CoA + reduced [electron-transfer flavoprotein]. The catalysed reaction is tetradecanoyl-CoA + oxidized [electron-transfer flavoprotein] + H(+) = (2E)-tetradecenoyl-CoA + reduced [electron-transfer flavoprotein]. It carries out the reaction oxidized [electron-transfer flavoprotein] + hexadecanoyl-CoA + H(+) = (2E)-hexadecenoyl-CoA + reduced [electron-transfer flavoprotein]. The enzyme catalyses octadecanoyl-CoA + oxidized [electron-transfer flavoprotein] + H(+) = (2E)-octadecenoyl-CoA + reduced [electron-transfer flavoprotein]. It catalyses the reaction eicosanoyl-CoA + oxidized [electron-transfer flavoprotein] + H(+) = (2E)-eicosenoyl-CoA + reduced [electron-transfer flavoprotein]. The catalysed reaction is docosanoyl-CoA + oxidized [electron-transfer flavoprotein] + H(+) = (2E)-docosenoyl-CoA + reduced [electron-transfer flavoprotein]. It carries out the reaction tetracosanoyl-CoA + oxidized [electron-transfer flavoprotein] + H(+) = (2E)-tetracosenoyl-CoA + reduced [electron-transfer flavoprotein]. The enzyme catalyses (5E)-tetradecenoyl-CoA + oxidized [electron-transfer flavoprotein] + H(+) = (2E,5E)-tetradecadienoyl-CoA + reduced [electron-transfer flavoprotein]. It catalyses the reaction (5Z)-tetradecenoyl-CoA + oxidized [electron-transfer flavoprotein] + H(+) = (2E,5Z)-tetradecadienoyl-CoA + reduced [electron-transfer flavoprotein]. The catalysed reaction is oxidized [electron-transfer flavoprotein] + (9Z)-octadecenoyl-CoA + H(+) = (2E,9Z)-octadecadienoyl-CoA + reduced [electron-transfer flavoprotein]. It participates in lipid metabolism; mitochondrial fatty acid beta-oxidation. Its function is as follows. Long-chain specific acyl-CoA dehydrogenase is one of the acyl-CoA dehydrogenases that catalyze the first step of mitochondrial fatty acid beta-oxidation, an aerobic process breaking down fatty acids into acetyl-CoA and allowing the production of energy from fats. The first step of fatty acid beta-oxidation consists in the removal of one hydrogen from C-2 and C-3 of the straight-chain fatty acyl-CoA thioester, resulting in the formation of trans-2-enoyl-CoA. Among the different mitochondrial acyl-CoA dehydrogenases, long-chain specific acyl-CoA dehydrogenase can act on saturated and unsaturated acyl-CoAs with 6 to 24 carbons with a preference for 8 to 18 carbons long primary chains. This is Long-chain specific acyl-CoA dehydrogenase, mitochondrial from Sus scrofa (Pig).